The chain runs to 400 residues: Exodeoxyribonuclease 7 large subunit (400 aa).

The protein belongs to the XseA family. In terms of assembly, heterooligomer composed of large and small subunits.

It localises to the cytoplasm. The enzyme catalyses Exonucleolytic cleavage in either 5'- to 3'- or 3'- to 5'-direction to yield nucleoside 5'-phosphates.. Its function is as follows. Bidirectionally degrades single-stranded DNA into large acid-insoluble oligonucleotides, which are then degraded further into small acid-soluble oligonucleotides. This Clostridium perfringens (strain SM101 / Type A) protein is Exodeoxyribonuclease 7 large subunit.